The sequence spans 363 residues: Protein EXORDIUM-like 5 (363 aa).

An N-terminal signal peptide occupies residues M1 to S25. N144 carries an N-linked (GlcNAc...) asparagine glycan.

The protein belongs to the EXORDIUM family.

It is found in the secreted. The protein localises to the extracellular space. Its subcellular location is the apoplast. Its function is as follows. May play a role in a brassinosteroid-dependent regulation of growth and development. This chain is Protein EXORDIUM-like 5 (EXL5), found in Arabidopsis thaliana (Mouse-ear cress).